The sequence spans 339 residues: Uroporphyrinogen decarboxylase (339 aa).

Substrate contacts are provided by residues 21 to 25 (RQAGR), aspartate 71, tyrosine 147, serine 202, and histidine 315.

Belongs to the uroporphyrinogen decarboxylase family. In terms of assembly, homodimer.

It is found in the cytoplasm. The enzyme catalyses uroporphyrinogen III + 4 H(+) = coproporphyrinogen III + 4 CO2. Its pathway is porphyrin-containing compound metabolism; protoporphyrin-IX biosynthesis; coproporphyrinogen-III from 5-aminolevulinate: step 4/4. Its function is as follows. Catalyzes the decarboxylation of four acetate groups of uroporphyrinogen-III to yield coproporphyrinogen-III. The polypeptide is Uroporphyrinogen decarboxylase (Helicobacter pylori (strain P12)).